Here is a 376-residue protein sequence, read N- to C-terminus: Chaperone protein DnaJ (376 aa).

The region spanning 5–70 is the J domain; it reads DYYEVLGVAR…EKRARYDRFG (66 aa). Residues 137–215 form a CR-type zinc finger; it reads GDEVTLRLPK…CKGSGQTQQV (79 aa). The Zn(2+) site is built by C150, C153, C167, C170, C189, C192, C203, and C206. 4 CXXCXGXG motif repeats span residues 150–157, 167–174, 189–196, and 203–210; these read CDECGGSG, CRHCGGAG, CPVCRGEG, and CPKCKGSG.

This sequence belongs to the DnaJ family. Homodimer. Zn(2+) is required as a cofactor.

Its subcellular location is the cytoplasm. Functionally, participates actively in the response to hyperosmotic and heat shock by preventing the aggregation of stress-denatured proteins and by disaggregating proteins, also in an autonomous, DnaK-independent fashion. Unfolded proteins bind initially to DnaJ; upon interaction with the DnaJ-bound protein, DnaK hydrolyzes its bound ATP, resulting in the formation of a stable complex. GrpE releases ADP from DnaK; ATP binding to DnaK triggers the release of the substrate protein, thus completing the reaction cycle. Several rounds of ATP-dependent interactions between DnaJ, DnaK and GrpE are required for fully efficient folding. Also involved, together with DnaK and GrpE, in the DNA replication of plasmids through activation of initiation proteins. The protein is Chaperone protein DnaJ of Nitratidesulfovibrio vulgaris (strain ATCC 29579 / DSM 644 / CCUG 34227 / NCIMB 8303 / VKM B-1760 / Hildenborough) (Desulfovibrio vulgaris).